The following is a 162-amino-acid chain: Peptide deformylase-like (162 aa).

Belongs to the polypeptide deformylase family.

This Staphylococcus aureus (strain MRSA252) protein is Peptide deformylase-like.